A 339-amino-acid chain; its full sequence is MRSSWDIRVTDTSLRDGSHHKRHQFTGEEVRAIVGALDHAGVPVIEVTHGDGLGGSSFNYGFSKVPEQELISIAVDTAKNAKIAFLMLPGLGIKDDIIVAQDNGASICRIATHCTEADVSIQHFGLARDRGLETVGFLMMAHSIAPEKLAKQARIMADAGCQCVYVVDSAGALVLEQVSDRVEALVQELGSDAQVGFHGHENLGLGVANSIAAVRAGAKQIDGSTRRFGAGAGNAPVEAFVGVCDKIGVKTGIDFFAIADAAEDVVRPAMPAECLLDRQALMMGYAGVYSSFLKHAERQAERYGVSSAELLVRAGKRKLVGGQEDQLIDIALELQRERL.

The Pyruvate carboxyltransferase domain occupies 7 to 259 (IRVTDTSLRD…KTGIDFFAIA (253 aa)). 15 to 16 (RD) provides a ligand contact to substrate. Residue D16 coordinates Mn(2+). H19 (proton acceptor) is an active-site residue. Residues S169 and H198 each contribute to the substrate site. Mn(2+) is bound by residues H198 and H200. Substrate is bound at residue Y289.

The protein belongs to the 4-hydroxy-2-oxovalerate aldolase family.

It catalyses the reaction (S)-4-hydroxy-2-oxopentanoate = acetaldehyde + pyruvate. The sequence is that of 4-hydroxy-2-oxovalerate aldolase 3 (hsaF) from Rhodococcus jostii (strain RHA1).